The chain runs to 508 residues: Photosystem II CP47 reaction center protein (508 aa).

The next 6 membrane-spanning stretches (helical) occupy residues alanine 21 to serine 36, isoleucine 101 to tryptophan 115, glycine 140 to phenylalanine 156, isoleucine 203 to serine 218, valine 237 to valine 252, and threonine 457 to arginine 472.

This sequence belongs to the PsbB/PsbC family. PsbB subfamily. In terms of assembly, PSII is composed of 1 copy each of membrane proteins PsbA, PsbB, PsbC, PsbD, PsbE, PsbF, PsbH, PsbI, PsbJ, PsbK, PsbL, PsbM, PsbT, PsbX, PsbY, PsbZ, Psb30/Ycf12, at least 3 peripheral proteins of the oxygen-evolving complex and a large number of cofactors. It forms dimeric complexes. Requires Binds multiple chlorophylls. PSII binds additional chlorophylls, carotenoids and specific lipids. as cofactor.

The protein localises to the plastid. It localises to the chloroplast thylakoid membrane. One of the components of the core complex of photosystem II (PSII). It binds chlorophyll and helps catalyze the primary light-induced photochemical processes of PSII. PSII is a light-driven water:plastoquinone oxidoreductase, using light energy to abstract electrons from H(2)O, generating O(2) and a proton gradient subsequently used for ATP formation. The sequence is that of Photosystem II CP47 reaction center protein from Hordeum vulgare (Barley).